A 473-amino-acid chain; its full sequence is Chromosomal replication initiator protein DnaA (473 aa).

Positions 1 to 76 (MNYHSTNVNE…RTVLGRVIGP (76 aa)) are domain I, interacts with DnaA modulators. The domain II stretch occupies residues 76 to 135 (PNASLQYNALVDNSSPKYPGTVTLAGCADGGQAAEQFDVNLLHRHMPNAATHSEAQDFDT). Positions 136–353 (QLNSRLNFRN…GTLVSLITNS (218 aa)) are domain III, AAA+ region. Residues glycine 181, glycine 183, lysine 184, and threonine 185 each coordinate ATP. Positions 354 to 473 (VVVGKEIDLT…VERAEQLIAN (120 aa)) are domain IV, binds dsDNA.

This sequence belongs to the DnaA family. As to quaternary structure, oligomerizes as a right-handed, spiral filament on DNA at oriC.

It is found in the cytoplasm. In terms of biological role, plays an essential role in the initiation and regulation of chromosomal replication. ATP-DnaA binds to the origin of replication (oriC) to initiate formation of the DNA replication initiation complex once per cell cycle. Binds the DnaA box (a 9 base pair repeat at the origin) and separates the double-stranded (ds)DNA. Forms a right-handed helical filament on oriC DNA; dsDNA binds to the exterior of the filament while single-stranded (ss)DNA is stabiized in the filament's interior. The ATP-DnaA-oriC complex binds and stabilizes one strand of the AT-rich DNA unwinding element (DUE), permitting loading of DNA polymerase. After initiation quickly degrades to an ADP-DnaA complex that is not apt for DNA replication. Binds acidic phospholipids. In Porphyromonas gingivalis (strain ATCC 33277 / DSM 20709 / CIP 103683 / JCM 12257 / NCTC 11834 / 2561), this protein is Chromosomal replication initiator protein DnaA.